The chain runs to 954 residues: Kinesin-like protein KIN-14Q (954 aa).

The Calponin-homology (CH) domain maps to 33–155 (AMRRYDAASW…CVLALKSFSE (123 aa)). The Kinesin motor domain occupies 374–699 (NIRVYCRVRP…LKFAERVASV (326 aa)). 457 to 464 (GQTGSGKT) contacts ATP. Positions 704 to 733 (AKANKEGSEVRELKEQIATLKAALAKKEGE) form a coiled coil. The span at 844–855 (YDPDKQRRRAEP) shows a compositional bias: basic and acidic residues. Disordered regions lie at residues 844 to 876 (YDPDKQRRRAEPVETDDSDSFDAATSSPSDQEM) and 912 to 954 (PNLA…NTPK). The segment covering 864–873 (FDAATSSPSD) has biased composition (low complexity). Polar residues predominate over residues 928 to 954 (PIRNSKQLPFSTTGGRRTRNGKINTPK).

This sequence belongs to the TRAFAC class myosin-kinesin ATPase superfamily. Kinesin family. KIN-14 subfamily. Forms oligomers in vitro. Interacts with actin microfilaments. Binds to actin in vitro through its calponin-homology (CH) domain. Expressed in primary leaf, primary root, developing flower and coleoptile.

The protein resides in the cytoplasm. The protein localises to the cytoskeleton. The microtubule-dependent ATPase activity is regulated by actin binding. Functionally, minus end-directed motor protein that transports actin filaments along microtubules. Plays a central role in the polar orientation of actin filaments along microtubules, and thus a contribution to the organization of the cytoskeletal architecture. Links the actin microfilaments with the cortical microtubules in both cycling and non-cycling cells. Required for efficient cell elongation by its participation in the premitotic nuclear positioning. The protein is Kinesin-like protein KIN-14Q of Oryza sativa subsp. japonica (Rice).